The chain runs to 384 residues: S-adenosylmethionine synthase (384 aa).

His-15 provides a ligand contact to ATP. Asp-17 lines the Mg(2+) pocket. Glu-43 provides a ligand contact to K(+). Residues Glu-56 and Gln-99 each contribute to the L-methionine site. A flexible loop region spans residues 99–109 (QSPDINQGVDR). ATP contacts are provided by residues 164 to 166 (DAK), 230 to 231 (RF), Asp-239, 245 to 246 (RK), Ala-262, and Lys-266. Residue Asp-239 participates in L-methionine binding. Lys-270 serves as a coordination point for L-methionine.

This sequence belongs to the AdoMet synthase family. As to quaternary structure, homotetramer; dimer of dimers. Mg(2+) serves as cofactor. The cofactor is K(+).

The protein localises to the cytoplasm. The enzyme catalyses L-methionine + ATP + H2O = S-adenosyl-L-methionine + phosphate + diphosphate. It functions in the pathway amino-acid biosynthesis; S-adenosyl-L-methionine biosynthesis; S-adenosyl-L-methionine from L-methionine: step 1/1. Catalyzes the formation of S-adenosylmethionine (AdoMet) from methionine and ATP. The overall synthetic reaction is composed of two sequential steps, AdoMet formation and the subsequent tripolyphosphate hydrolysis which occurs prior to release of AdoMet from the enzyme. This Yersinia pseudotuberculosis serotype IB (strain PB1/+) protein is S-adenosylmethionine synthase.